The chain runs to 271 residues: Tryptophan synthase alpha chain (271 aa).

Residues Glu49 and Asp60 each act as proton acceptor in the active site.

This sequence belongs to the TrpA family. As to quaternary structure, tetramer of two alpha and two beta chains.

It catalyses the reaction (1S,2R)-1-C-(indol-3-yl)glycerol 3-phosphate + L-serine = D-glyceraldehyde 3-phosphate + L-tryptophan + H2O. It participates in amino-acid biosynthesis; L-tryptophan biosynthesis; L-tryptophan from chorismate: step 5/5. In terms of biological role, the alpha subunit is responsible for the aldol cleavage of indoleglycerol phosphate to indole and glyceraldehyde 3-phosphate. The protein is Tryptophan synthase alpha chain of Burkholderia ambifaria (strain MC40-6).